A 206-amino-acid chain; its full sequence is Heat shock protein beta-1 (206 aa).

The residue at position 12 (Arg12) is an Omega-N-methylarginine. Position 13 is a phosphoserine (Ser13). Ser15 bears the Phosphoserine; by MAPKAPK2 and MAPKAPK3 mark. Residue Ser27 is modified to Phosphoserine. The interaction with TGFB1I1 stretch occupies residues 74–206; that stretch reads RPAFSRALNR…GPESEQSGAK (133 aa). Residues 80–188 form the sHSP domain; that stretch reads ALNRQLSSGV…QSAEITIPVT (109 aa). Phosphoserine; by MAPKAPK2, MAPKAPK3 and MAPKAPK5 is present on Ser86. Residues Ser87, Ser90, and Ser102 each carry the phosphoserine modification. The residue at position 127 (Lys127) is an N6-acetyllysine. Residue Thr178 is modified to Phosphothreonine. Residues Ser180 and Ser200 each carry the phosphoserine modification.

The protein belongs to the small heat shock protein (HSP20) family. Homooligomer. Homodimer; becomes monomeric upon activation. Heterooligomer; with HSPB6. Associates with alpha- and beta-tubulin. Interacts with TGFB1I1. Interacts with CRYAB. Interacts with HSPB8. Interacts with HSPBAP1. Phosphorylated upon exposure to protein kinase C activators and heat shock. Phosphorylation by MAPKAPK2 and MAPKAPK3 in response to stress dissociates HSPB1 from large small heat-shock protein (sHsps) oligomers and impairs its chaperone activity and ability to protect against oxidative stress effectively. Phosphorylation by MAPKAPK5 in response to PKA stimulation induces F-actin rearrangement. As to expression, expressed in a variety of tissues. High levels in lung, adrenal, xiphoid, adipose tissue, heart and striated and smooth muscle, lower levels in the CNS. Adult levels are much higher in the slow-twitch soleus muscle than in the fast-twitch rectus femoris and extensor digitorum muscles.

Its subcellular location is the cytoplasm. The protein localises to the nucleus. The protein resides in the cytoskeleton. It localises to the spindle. Small heat shock protein which functions as a molecular chaperone probably maintaining denatured proteins in a folding-competent state. Plays a role in stress resistance and actin organization. Through its molecular chaperone activity may regulate numerous biological processes including the phosphorylation and the axonal transport of neurofilament proteins. This is Heat shock protein beta-1 (Hspb1) from Rattus norvegicus (Rat).